The following is a 224-amino-acid chain: Large ribosomal subunit protein uL3 (224 aa).

Residue Q158 is modified to N5-methylglutamine.

The protein belongs to the universal ribosomal protein uL3 family. As to quaternary structure, part of the 50S ribosomal subunit. Forms a cluster with proteins L14 and L19. Methylated by PrmB.

Its function is as follows. One of the primary rRNA binding proteins, it binds directly near the 3'-end of the 23S rRNA, where it nucleates assembly of the 50S subunit. This chain is Large ribosomal subunit protein uL3, found in Acidovorax sp. (strain JS42).